The sequence spans 177 residues: Bifunctional protein PyrR (177 aa).

The short motif at 98 to 110 is the PRPP-binding element; sequence IILVDDVIYTGRT.

This sequence belongs to the purine/pyrimidine phosphoribosyltransferase family. PyrR subfamily. In terms of assembly, homodimer and homohexamer; in equilibrium.

It carries out the reaction UMP + diphosphate = 5-phospho-alpha-D-ribose 1-diphosphate + uracil. Functionally, regulates transcriptional attenuation of the pyrimidine nucleotide (pyr) operon by binding in a uridine-dependent manner to specific sites on pyr mRNA. This disrupts an antiterminator hairpin in the RNA and favors formation of a downstream transcription terminator, leading to a reduced expression of downstream genes. Also displays a weak uracil phosphoribosyltransferase activity which is not physiologically significant. This is Bifunctional protein PyrR from Clostridium kluyveri (strain ATCC 8527 / DSM 555 / NBRC 12016 / NCIMB 10680 / K1).